Here is a 505-residue protein sequence, read N- to C-terminus: ATP synthase subunit alpha (505 aa).

Position 170-177 (170-177 (GDRQTGKS)) interacts with ATP.

This sequence belongs to the ATPase alpha/beta chains family. F-type ATPases have 2 components, CF(1) - the catalytic core - and CF(0) - the membrane proton channel. CF(1) has five subunits: alpha(3), beta(3), gamma(1), delta(1), epsilon(1). CF(0) has four main subunits: a(1), b(1), b'(1) and c(9-12).

The protein resides in the cellular thylakoid membrane. It carries out the reaction ATP + H2O + 4 H(+)(in) = ADP + phosphate + 5 H(+)(out). In terms of biological role, produces ATP from ADP in the presence of a proton gradient across the membrane. The alpha chain is a regulatory subunit. This Prochlorococcus marinus (strain MIT 9312) protein is ATP synthase subunit alpha.